The following is a 2485-amino-acid chain: Tyrosine-protein phosphatase non-receptor type 13 (2485 aa).

The KIND domain maps to 3–190 (VSLAEALEVR…SGTDQLSCNS (188 aa)). Residues 186–220 (LSCNSEQKPDRSQAIRDRLRGKGLPTGRSSTSDVL) are disordered. Residues 192–205 (QKPDRSQAIRDRLR) are compositionally biased toward basic and acidic residues. Ser240 is subject to Phosphoserine. Residues 260 to 283 (SDNSGREDSENTFSPYQFKTSGPE) form a disordered region. Residues 270–279 (NTFSPYQFKT) are compositionally biased toward polar residues. Phosphoserine is present on residues Ser301 and Ser302. The tract at residues 433 to 467 (RSEASKRFESSSGLPGVDETLSQGQSQRPSRQYET) is disordered. The span at 452–465 (TLSQGQSQRPSRQY) shows a compositional bias: polar residues. The stretch at 469 to 504 (FEGNLINQEIMLKRQEEELMQLQAKMALRQSRLSLY) forms a coiled coil. The 301-residue stretch at 572–872 (RKVNIMLLNG…YQHKFQLQMR (301 aa)) folds into the FERM domain. Phosphoserine is present on residues Ser890, Ser897, Ser908, Ser911, and Ser914. Disordered regions lie at residues 947 to 975 (QNSS…DLSQ) and 995 to 1049 (TVAE…IEDP). Residues 950-971 (SKEKNDKASWEEKPREMSKSYH) are compositionally biased toward basic and acidic residues. Over residues 1020–1032 (KLNNSKSVASLNR) the composition is skewed to polar residues. Residues Ser1029, Ser1033, and Ser1085 each carry the phosphoserine modification. Basic and acidic residues predominate over residues 1033 to 1042 (SPERRKHESD). In terms of domain architecture, PDZ 1 spans 1093-1178 (LVNLKKDAKY…EDVTLVISQP (86 aa)). Disordered regions lie at residues 1227–1258 (HISE…SLSQ) and 1273–1362 (TWQE…SPPK). 3 stretches are compositionally biased toward polar residues: residues 1243 to 1258 (SLSS…SLSQ), 1273 to 1288 (TWQE…SVIS), and 1327 to 1359 (TYSS…FSSS). PDZ domains follow at residues 1368 to 1452 (EVEL…LEKG) and 1501 to 1588 (EVKL…LCRP). Positions 1608 to 1630 (AQVLPNSSKDSSQPSCVEQSTSS) are enriched in polar residues. Disordered regions lie at residues 1608-1665 (AQVL…DLVT) and 1715-1751 (PNKP…SSMD). Positions 1736–1749 (QSYQPQSESASSSS) are enriched in low complexity. 2 PDZ domains span residues 1788-1868 (LITL…IGRV) and 1882-1965 (PDIT…ATRN). The disordered stretch occupies residues 1971 to 1996 (PSSKRSAVSAPKSTKGNGSYSVGSCS). Polar residues predominate over residues 1973–1996 (SKRSAVSAPKSTKGNGSYSVGSCS). The Tyrosine-protein phosphatase domain maps to 2213–2467 (PSKELENLQE…IFCYQVILYV (255 aa)). Substrate contacts are provided by residues Asp2378, 2408-2414 (CSAGIGR), and Gln2452. Cys2408 serves as the catalytic Phosphocysteine intermediate. Positions 2408–2414 (CSAGIGR) are substrate.

The protein belongs to the protein-tyrosine phosphatase family. Non-receptor class subfamily. In terms of assembly, interacts (via the first PDZ domain) with PLEKHA1 and PLEKHA2. Interacts (via the second PDZ domain) with TNFRSF6 (Fas receptor) (via C-terminus). Interacts (via the second PDZ domain) with TRIP6 (via the third LIM domain and C-terminus). Interacts (via the third PDZ domain) with NGFR (via C-terminal SVP motif) and PKN2 (via C-terminus). Interacts (via the second or fourth PDZ domains) with PDLIM4 (via C-terminus only or via combined C-terminus and LIM domain, but not LIM domain only). Found in a complex with PDLIM4 and TRIP6. Interacts with PDLIM4; this interaction results in dephosphorylation of SRC 'Tyr-419' by this protein leading to its inactivation. Interacts with BRD7. Interacts with RAPGEF6. Interacts with ARHGAP29. Interacts with PIK3R2; dephosphorylates PIK3R2. Interacts with FBXL2. Interacts (via the FERM domain) with ENTR1. Found in a complex with ENTR1, PTPN13 and GIT1. As to expression, expressed in keratinocytes (at protein level). Present in most tissues with the exception of the liver and skeletal muscle. Most abundant in lung, kidney and fetal brain.

It is found in the cytoplasm. Its subcellular location is the cytoskeleton. The protein localises to the nucleus. The protein resides in the cell projection. It localises to the lamellipodium. The enzyme catalyses O-phospho-L-tyrosyl-[protein] + H2O = L-tyrosyl-[protein] + phosphate. Functionally, tyrosine phosphatase which negatively regulates FAS-induced apoptosis and NGFR-mediated pro-apoptotic signaling. May regulate phosphoinositide 3-kinase (PI3K) signaling through dephosphorylation of PIK3R2. The chain is Tyrosine-protein phosphatase non-receptor type 13 (PTPN13) from Homo sapiens (Human).